The sequence spans 483 residues: Aspartyl/glutamyl-tRNA(Asn/Gln) amidotransferase subunit B (483 aa).

Belongs to the GatB/GatE family. GatB subfamily. Heterotrimer of A, B and C subunits.

The catalysed reaction is L-glutamyl-tRNA(Gln) + L-glutamine + ATP + H2O = L-glutaminyl-tRNA(Gln) + L-glutamate + ADP + phosphate + H(+). The enzyme catalyses L-aspartyl-tRNA(Asn) + L-glutamine + ATP + H2O = L-asparaginyl-tRNA(Asn) + L-glutamate + ADP + phosphate + 2 H(+). Allows the formation of correctly charged Asn-tRNA(Asn) or Gln-tRNA(Gln) through the transamidation of misacylated Asp-tRNA(Asn) or Glu-tRNA(Gln) in organisms which lack either or both of asparaginyl-tRNA or glutaminyl-tRNA synthetases. The reaction takes place in the presence of glutamine and ATP through an activated phospho-Asp-tRNA(Asn) or phospho-Glu-tRNA(Gln). The protein is Aspartyl/glutamyl-tRNA(Asn/Gln) amidotransferase subunit B of Rickettsia typhi (strain ATCC VR-144 / Wilmington).